We begin with the raw amino-acid sequence, 931 residues long: Up-regulator of cell proliferation (931 aa).

Position 3 is a phosphoserine (S3). Residues 689–929 (RSRLVVLSTV…NIQQLIELVR (241 aa)) enclose the VLIG-type G domain.

Belongs to the TRAFAC class dynamin-like GTPase superfamily. Very large inducible GTPase (VLIG) family. As to expression, strongly expressed in hepatitis B virus-infected liver and in HCC cells. Also highly expressed in well-differentiated gastric cancer tissues and various gastric cancer cell lines.

It is found in the cytoplasm. It localises to the nucleus. In terms of biological role, may be involved in cell cycle progression through the regulation of cyclin D1 expression. May participate in the development of hepatocellular carcinoma (HCC) by promoting hepatocellular growth and survival. May play an important role in development of gastric cancer. In Homo sapiens (Human), this protein is Up-regulator of cell proliferation (URGCP).